The sequence spans 80 residues: Defensin-like protein 46 (80 aa).

The N-terminal stretch at methionine 1–alanine 27 is a signal peptide. 4 cysteine pairs are disulfide-bonded: cysteine 40/cysteine 78, cysteine 44/cysteine 65, cysteine 50/cysteine 76, and cysteine 54/cysteine 77.

It belongs to the DEFL family.

The protein resides in the secreted. In Arabidopsis thaliana (Mouse-ear cress), this protein is Defensin-like protein 46.